An 859-amino-acid chain; its full sequence is DNA mismatch repair protein MutS (859 aa).

622-629 (GPNMGGKS) contacts ATP.

The protein belongs to the DNA mismatch repair MutS family.

Functionally, this protein is involved in the repair of mismatches in DNA. It is possible that it carries out the mismatch recognition step. This protein has a weak ATPase activity. This is DNA mismatch repair protein MutS from Coxiella burnetii (strain RSA 493 / Nine Mile phase I).